The sequence spans 96 residues: Co-chaperonin GroES (96 aa).

The protein belongs to the GroES chaperonin family. In terms of assembly, heptamer of 7 subunits arranged in a ring. Interacts with the chaperonin GroEL.

Its subcellular location is the cytoplasm. Its function is as follows. Together with the chaperonin GroEL, plays an essential role in assisting protein folding. The GroEL-GroES system forms a nano-cage that allows encapsulation of the non-native substrate proteins and provides a physical environment optimized to promote and accelerate protein folding. GroES binds to the apical surface of the GroEL ring, thereby capping the opening of the GroEL channel. The chain is Co-chaperonin GroES from Actinobacillus pleuropneumoniae serotype 3 (strain JL03).